Here is a 602-residue protein sequence, read N- to C-terminus: MRSMRALQNALSRAGSHGQRGGWGHPSRGPLLGGGVRYYFGEAAAQGRGTPHSHQPQHSDHDASNSGMLPRLGDLLFYTIAEGQERIPIHKFTTALKATGLQTSDPRLQDCMSKMQRMVQESSSGGLLDRELFQKCVSSNIVLLTQAFRKKFVIPDFEEFTGHVDRIFEDAKELTGGKVAAYIPHLAKSNPDLWGVSLCTVDGQRHSVGHTKIPFCLQSCVKPLTYAISVSTLGTDYVHKFVGKEPSGLRYNKLSLNEEGIPHNPMVNAGAIVVSSLIKMDCNKAEKFDFVLQYLNKMAGNEFMGFSNATFQSEKETGDRNYAIGYYLKEKKCFPKGVDMMAALDLYFQLCSVEVTCESGSVMAATLANGGICPITGESVLSAEAVRNTLSLMHSCGMYDFSGQFAFHVGLPAKSAVSGAILLVVPNVMGMMCLSPPLDKLGNSHRGISFCQKLVSLFNFHNYDNLRHCARKLDPRREGGEVRNKTVVNLLFAAYSGDVSALRRFALSAVDMEQKDYDSRTALHVAAAEGHIDVVKFLIEACKVNPFVKDRWGNIPLDDAVQFNHLEVVKLLQDYHDSYMLSETQAEVAAETLSKENLESMV.

A mitochondrion-targeting transit peptide spans 1–14 (MRSMRALQNALSRA). Disordered regions lie at residues 1-28 (MRSM…HPSR) and 46-67 (QGRG…SNSG). Position 219 (S219) interacts with substrate. The residue at position 253 (K253) is an N6-succinyllysine. A substrate-binding site is contributed by N268. K279 and K284 each carry N6-acetyllysine. E314 and N321 together coordinate substrate. N6-acetyllysine is present on K329. Positions 347, 399, and 417 each coordinate substrate. 2 ANK repeats span residues 518 to 551 (DSRT…VKDR) and 552 to 585 (WGNI…SETQ).

Belongs to the glutaminase family. Homotetramer, dimer of dimers. Does not assemble into higher oligomers. Interacts with the PDZ domain of the syntrophin SNTA1. Interacts with the PDZ domain of TAX1BP3. As to expression, liver specific.

The protein resides in the mitochondrion. It catalyses the reaction L-glutamine + H2O = L-glutamate + NH4(+). Its function is as follows. Plays an important role in the regulation of glutamine catabolism. Promotes mitochondrial respiration and increases ATP generation in cells by catalyzing the synthesis of glutamate and alpha-ketoglutarate. Increases cellular anti-oxidant function via NADH and glutathione production. May play a role in preventing tumor proliferation. The chain is Glutaminase liver isoform, mitochondrial (Gls2) from Rattus norvegicus (Rat).